Consider the following 364-residue polypeptide: DNA replication and repair protein RecF (364 aa).

30–37 is an ATP binding site; the sequence is GNNAQGKT.

This sequence belongs to the RecF family.

It localises to the cytoplasm. Its function is as follows. The RecF protein is involved in DNA metabolism; it is required for DNA replication and normal SOS inducibility. RecF binds preferentially to single-stranded, linear DNA. It also seems to bind ATP. This chain is DNA replication and repair protein RecF, found in Clostridium botulinum (strain 657 / Type Ba4).